A 189-amino-acid chain; its full sequence is Fine tangled pili major subunit (189 aa).

This sequence belongs to the Dps family. As to quaternary structure, hexamer.

The protein localises to the fimbrium. In terms of biological role, may contribute to bacterial adherence, or be involved in the protection of the bacteria, or both. The chain is Fine tangled pili major subunit (ftpA) from Haemophilus ducreyi (strain 35000HP / ATCC 700724).